Consider the following 418-residue polypeptide: UDP-N-acetylglucosamine 1-carboxyvinyltransferase (418 aa).

22 to 23 is a binding site for phosphoenolpyruvate; sequence KN. Arg92 is a binding site for UDP-N-acetyl-alpha-D-glucosamine. Residue Cys116 is the Proton donor of the active site. At Cys116 the chain carries 2-(S-cysteinyl)pyruvic acid O-phosphothioketal. UDP-N-acetyl-alpha-D-glucosamine is bound by residues 121–125, Asp306, and Ile328; that span reads RPVDQ.

Belongs to the EPSP synthase family. MurA subfamily.

The protein resides in the cytoplasm. The catalysed reaction is phosphoenolpyruvate + UDP-N-acetyl-alpha-D-glucosamine = UDP-N-acetyl-3-O-(1-carboxyvinyl)-alpha-D-glucosamine + phosphate. It participates in cell wall biogenesis; peptidoglycan biosynthesis. Its function is as follows. Cell wall formation. Adds enolpyruvyl to UDP-N-acetylglucosamine. The chain is UDP-N-acetylglucosamine 1-carboxyvinyltransferase from Acinetobacter baylyi (strain ATCC 33305 / BD413 / ADP1).